A 783-amino-acid chain; its full sequence is Cyclic di-GMP phosphodiesterase NbdA (783 aa).

In terms of domain architecture, MHYT spans 81-274 (YSPSLVALAF…FTGMAALVLS (194 aa)). Helical transmembrane passes span 84–104 (SLVA…LDMV), 120–140 (IGAF…MLAF), 150–170 (LPIT…TMYM), 176–196 (FGLL…AAMH), 215–235 (LFAL…AAVP), 255–275 (LLAG…VLSV), and 292–312 (LGWL…WAAW). The Cytoplasmic portion of the chain corresponds to 313-783 (SEKQRERRLS…APPLRSLNQA (471 aa)). The 133-residue stretch at 375 to 507 (KGLAVMFLDL…GRNNAQFFSR (133 aa)) folds into the GGDEF domain. Positions 516–770 (ELQMEEELRQ…ALEEFLRAYR (255 aa)) constitute an EAL domain. The 3',3'-c-di-GMP site is built by Gln-537, Glu-551, Arg-555, Asn-610, and Asn-615. Glu-551 provides a ligand contact to Mg(2+). Asn-610 contributes to the Mg(2+) binding site. 3 residues coordinate Mg(2+): Glu-642, Asp-672, and Asp-673. A 3',3'-c-di-GMP-binding site is contributed by Asp-672. Arg-696 contributes to the 3',3'-c-di-GMP binding site. Glu-729 is a binding site for Mg(2+). Residues Glu-732 and Tyr-751 each coordinate 3',3'-c-di-GMP.

The cofactor is Mg(2+).

The protein localises to the cell inner membrane. It catalyses the reaction 3',3'-c-di-GMP + H2O = 5'-phosphoguanylyl(3'-&gt;5')guanosine + H(+). PDE activity is stimulated by GTP. It could also be stimulated by NO. Displays c-di-GMP-specific phosphodiesterase (PDE) activity. Seems to play a specific role in nitric oxide (NO)-induced biofilm dispersion. Enhanced NbdA synthesis in the presence of NO increases PDE activity, leading to reduced cellular c-di-GMP levels and biofilm dispersion. Does not show diguanylate cyclase (DGC) activity. The polypeptide is Cyclic di-GMP phosphodiesterase NbdA (Pseudomonas aeruginosa (strain ATCC 15692 / DSM 22644 / CIP 104116 / JCM 14847 / LMG 12228 / 1C / PRS 101 / PAO1)).